A 94-amino-acid polypeptide reads, in one-letter code: Large ribosomal subunit protein uL23 (94 aa).

The protein belongs to the universal ribosomal protein uL23 family. Part of the 50S ribosomal subunit. Contacts protein L29, and trigger factor when it is bound to the ribosome.

Functionally, one of the early assembly proteins it binds 23S rRNA. One of the proteins that surrounds the polypeptide exit tunnel on the outside of the ribosome. Forms the main docking site for trigger factor binding to the ribosome. The protein is Large ribosomal subunit protein uL23 of Akkermansia muciniphila (strain ATCC BAA-835 / DSM 22959 / JCM 33894 / BCRC 81048 / CCUG 64013 / CIP 107961 / Muc).